Consider the following 285-residue polypeptide: uncharacterized protein (285 aa).

A helical transmembrane segment spans residues 197-217 (PTIGALLSLVSAFFSFIPFLM).

It localises to the membrane. This is an uncharacterized protein from Saccharomyces cerevisiae (strain ATCC 204508 / S288c) (Baker's yeast).